Reading from the N-terminus, the 264-residue chain is Thymidylate synthase (264 aa).

Position 21 (arginine 21) interacts with dUMP. Histidine 51 is a (6R)-5,10-methylene-5,6,7,8-tetrahydrofolate binding site. Arginine 126–arginine 127 is a dUMP binding site. Catalysis depends on cysteine 146, which acts as the Nucleophile. DUMP-binding positions include arginine 166–aspartate 169, asparagine 177, and histidine 207–tyrosine 209. Aspartate 169 contacts (6R)-5,10-methylene-5,6,7,8-tetrahydrofolate. Position 263 (serine 263) interacts with (6R)-5,10-methylene-5,6,7,8-tetrahydrofolate.

The protein belongs to the thymidylate synthase family. Bacterial-type ThyA subfamily. As to quaternary structure, homodimer.

Its subcellular location is the cytoplasm. It carries out the reaction dUMP + (6R)-5,10-methylene-5,6,7,8-tetrahydrofolate = 7,8-dihydrofolate + dTMP. The protein operates within pyrimidine metabolism; dTTP biosynthesis. Its function is as follows. Catalyzes the reductive methylation of 2'-deoxyuridine-5'-monophosphate (dUMP) to 2'-deoxythymidine-5'-monophosphate (dTMP) while utilizing 5,10-methylenetetrahydrofolate (mTHF) as the methyl donor and reductant in the reaction, yielding dihydrofolate (DHF) as a by-product. This enzymatic reaction provides an intracellular de novo source of dTMP, an essential precursor for DNA biosynthesis. The protein is Thymidylate synthase of Buchnera aphidicola subsp. Acyrthosiphon pisum (strain Tuc7).